A 690-amino-acid polypeptide reads, in one-letter code: Glycine--tRNA ligase 1, mitochondrial (690 aa).

The transit peptide at methionine 1–methionine 24 directs the protein to the mitochondrion. At serine 25 the chain carries N-acetylserine. The residue at position 226 (serine 226) is a Phosphoserine. Glutamate 251 is a glycine binding site. Residues arginine 283–glutamate 285 and arginine 294–valine 295 each bind ATP. Glutamate 302 is a glycine binding site. Residue glutamate 410–cysteine 411 participates in ATP binding. 2 positions are modified to phosphoserine: serine 476 and serine 528. Glycine is bound at residue glutamate 531–serine 533. ATP is bound at residue arginine 538. Threonine 689 carries the phosphothreonine modification.

The protein belongs to the class-II aminoacyl-tRNA synthetase family. Homodimer.

Its subcellular location is the cytoplasm. It is found in the mitochondrion matrix. It catalyses the reaction tRNA(Gly) + glycine + ATP = glycyl-tRNA(Gly) + AMP + diphosphate. The enzyme catalyses 2 ATP + H(+) = P(1),P(4)-bis(5'-adenosyl) tetraphosphate + diphosphate. Catalyzes the ATP-dependent ligation of glycine to the 3'-end of its cognate tRNA, via the formation of an aminoacyl-adenylate intermediate (Gly-AMP). Also produces diadenosine tetraphosphate (Ap4A), a universal pleiotropic signaling molecule needed for cell regulation pathways, by direct condensation of 2 ATPs. Thereby, may play a special role in Ap4A homeostasis. The protein is Glycine--tRNA ligase 1, mitochondrial (GRS1) of Saccharomyces cerevisiae (strain ATCC 204508 / S288c) (Baker's yeast).